The sequence spans 167 residues: Cytochrome c-type biogenesis protein CcmE (167 aa).

Over 1 to 7 (MTRKTRR) the chain is Cytoplasmic. Residues 8–28 (LWIVIACLACVGSAAALTLRA) form a helical; Signal-anchor for type II membrane protein membrane-spanning segment. The Periplasmic portion of the chain corresponds to 29–167 (FSSNIVFFMA…DTMTAKKAGG (139 aa)). Heme-binding residues include His-125 and Tyr-129. Basic and acidic residues predominate over residues 141-150 (TGKWDPRFGK). The disordered stretch occupies residues 141–167 (TGKWDPRFGKAPDASSWDTMTAKKAGG).

Belongs to the CcmE/CycJ family.

It is found in the cell inner membrane. Its function is as follows. Heme chaperone required for the biogenesis of c-type cytochromes. Transiently binds heme delivered by CcmC and transfers the heme to apo-cytochromes in a process facilitated by CcmF and CcmH. In Gluconobacter oxydans (strain 621H) (Gluconobacter suboxydans), this protein is Cytochrome c-type biogenesis protein CcmE.